The chain runs to 194 residues: Potassium-transporting ATPase KdpC subunit (194 aa).

The helical transmembrane segment at 12–34 (LFLLLLTGGVYPLLTTALGQWWF) threads the bilayer.

Belongs to the KdpC family. The system is composed of three essential subunits: KdpA, KdpB and KdpC.

It localises to the cell inner membrane. In terms of biological role, part of the high-affinity ATP-driven potassium transport (or Kdp) system, which catalyzes the hydrolysis of ATP coupled with the electrogenic transport of potassium into the cytoplasm. This subunit acts as a catalytic chaperone that increases the ATP-binding affinity of the ATP-hydrolyzing subunit KdpB by the formation of a transient KdpB/KdpC/ATP ternary complex. This Salmonella heidelberg (strain SL476) protein is Potassium-transporting ATPase KdpC subunit.